Consider the following 685-residue polypeptide: Putative pentatricopeptide repeat-containing protein At3g08820 (685 aa).

12 PPR repeats span residues 75 to 109, 110 to 144, 145 to 175, 176 to 210, 211 to 245, 246 to 276, 277 to 311, 312 to 346, 347 to 381, 383 to 412, 413 to 443, and 449 to 479; these read NIFL…GLYL, HGFT…GFNH, DVAA…IPDR, SVVT…GVKP, DSYF…EMQK, NSFV…MVEK, DIVT…NLKP, DQFS…EFLT, NLFM…DIVI, NAAI…GISP, DGST…ISCV, and TVEH…MPMR. A type E motif region spans residues 484-559; the sequence is VWGALLSGCR…IPGYSWIELE (76 aa). The segment at 560 to 590 is type E(+) motif; sequence GKVHEFLADDKSHPLSDKIYAKLEDLGNEMR. The tract at residues 591–685 is type DYW motif; that stretch reads LMGFVPTTEF…NGSCSCNDYW (95 aa).

It belongs to the PPR family. PCMP-H subfamily.

This Arabidopsis thaliana (Mouse-ear cress) protein is Putative pentatricopeptide repeat-containing protein At3g08820 (PCMP-H84).